The following is a 246-amino-acid chain: MADS-box transcription factor 14 (246 aa).

Positions 1–61 constitute an MADS-box domain; it reads MGRGKVQLKR…GKLYKYATDS (61 aa). The region spanning 88–178 is the K-box domain; that stretch reads QGNWCHEYRK…QKELVEKQKV (91 aa). A disordered region spans residues 180 to 199; that stretch reads KQQVQWDQTQPQTSSSSSSF.

In terms of tissue distribution, highly expressed in sterile lemmas, at intermediate levels in stamens, and weakly in lemmas, paleas and carpels.

The protein resides in the nucleus. Its function is as follows. Probable transcription factor. This Oryza sativa subsp. indica (Rice) protein is MADS-box transcription factor 14 (MADS14).